The chain runs to 338 residues: Fructose-1,6-bisphosphatase 1 (338 aa).

Thr-2 bears the N-acetylthreonine mark. AMP is bound by residues 18-22 (VMEEG) and 28-32 (TGEMT). Asp-69 and Glu-98 together coordinate Mg(2+). 113 to 114 (KY) is a binding site for AMP. Mg(2+)-binding residues include Asp-119, Leu-121, and Asp-122. Substrate is bound at residue 122–125 (DGSS). AMP is bound at residue Lys-141. Residue Lys-151 is modified to N6-succinyllysine. Phosphoserine is present on Ser-208. Residues 213 to 216 (NEGY), 244 to 249 (RYVGSM), Tyr-265, and 275 to 277 (KLR) each bind substrate. A phosphotyrosine mark is found at Tyr-216, Tyr-245, and Tyr-265. Glu-281 lines the Mg(2+) pocket.

Belongs to the FBPase class 1 family. In terms of assembly, homotetramer. The cofactor is Mg(2+).

The enzyme catalyses beta-D-fructose 1,6-bisphosphate + H2O = beta-D-fructose 6-phosphate + phosphate. Its pathway is carbohydrate biosynthesis; gluconeogenesis. Its activity is regulated as follows. Subject to complex allosteric regulation. The enzyme can assume an active R-state, or an inactive T-state. Intermediate conformations may exist. AMP acts as an allosteric inhibitor. AMP binding affects the turnover of bound substrate and not the affinity for substrate. Fructose 2,6-bisphosphate acts as a competitive inhibitor. Fructose 2,6-bisphosphate and AMP have synergistic effects. Catalyzes the hydrolysis of fructose 1,6-bisphosphate to fructose 6-phosphate in the presence of divalent cations, acting as a rate-limiting enzyme in gluconeogenesis. Plays a role in regulating glucose sensing and insulin secretion of pancreatic beta-cells. Appears to modulate glycerol gluconeogenesis in liver. Important regulator of appetite and adiposity; increased expression of the protein in liver after nutrient excess increases circulating satiety hormones and reduces appetite-stimulating neuropeptides and thus seems to provide a feedback mechanism to limit weight gain. The protein is Fructose-1,6-bisphosphatase 1 (FBP1) of Bos taurus (Bovine).